Consider the following 1066-residue polypeptide: Vinculin (1066 aa).

The interval 1 to 835 is N-terminal globular head; the sequence is MPVFHTRTIE…GAVAKVREAF (835 aa). Serine 97 is subject to Phosphoserine. Residues 168-208 are talin-interaction; the sequence is MTKMAKMIDERQQELTHQEHRVMLVNSMNTVKELLPVLISA. Position 173 is an N6-acetyllysine (lysine 173). Repeat copies occupy residues 259–369, 370–479, and 480–589. A 3 X 112 AA tandem repeats region spans residues 259–589; that stretch reads ASKDTEAMKR…LKDLKAQMQE (331 aa). Phosphoserine is present on residues serine 260, serine 272, serine 275, serine 290, serine 346, and serine 434. Lysine 496 bears the N6-acetyllysine mark. Tyrosine 537 is subject to Phosphotyrosine. Serine 574, serine 579, and serine 600 each carry phosphoserine. Threonine 604 and threonine 672 each carry phosphothreonine. Serine 721 is subject to Phosphoserine. The interaction with ACTN4 stretch occupies residues 741–764; the sequence is MANIQPQMLVAGATSIARRANRIL. A phosphoserine mark is found at serine 795 and serine 809. The residue at position 822 (tyrosine 822) is a Phosphotyrosine. The segment at 836 to 878 is linker (Pro-rich); the sequence is QPQEPDFPPPPPDLEQLRLTDELAPPKPPLPEGEVPPPRPPPP. The interval 857 to 887 is disordered; that stretch reads ELAPPKPPLPEGEVPPPRPPPPEEKDEEFPE. The segment covering 860–876 has biased composition (pro residues); that stretch reads PPKPPLPEGEVPPPRPP. A C-terminal tail region spans residues 879-1066; it reads EEKDEEFPEQ…RWVRKTPWYQ (188 aa). 2 facilitates phospholipid membrane insertion regions span residues 935-978 and 1052-1066; these read RLVR…KRIR and AGFTLRWVRKTPWYQ. A Phosphotyrosine; by SRC-type Tyr-kinases modification is found at tyrosine 1065.

This sequence belongs to the vinculin/alpha-catenin family. In terms of assembly, exhibits self-association properties. Part of a complex composed of THSD1, PTK2/FAK1, TLN1 and VCL. Interacts with APBB1IP, NRAP and TLN1. Interacts with SYNM. Interacts with CTNNB1 and this interaction is necessary for its localization to the cell-cell junctions and for its function in regulating cell surface expression of E-cadherin. Interacts with SORBS1. Interacts with SYNM. Interacts with CTNNA1. Binds to ACTN4; this interaction triggers conformational changes. Interacts with FLII. Phosphorylated; on serines, threonines and tyrosines. Phosphorylation on Tyr-1065 in activated platelets affects head-tail interactions and cell spreading but has no effect on actin binding nor on localization to focal adhesion plaques. Post-translationally, acetylated; mainly by myristic acid but also by a small amount of palmitic acid.

It localises to the cell membrane. It is found in the cell junction. The protein localises to the adherens junction. The protein resides in the focal adhesion. Its subcellular location is the cytoplasm. It localises to the cytoskeleton. It is found in the sarcolemma. The protein localises to the cell projection. The protein resides in the podosome. Its function is as follows. Actin filament (F-actin)-binding protein involved in cell-matrix adhesion and cell-cell adhesion. Regulates cell-surface E-cadherin expression and potentiates mechanosensing by the E-cadherin complex. May also play important roles in cell morphology and locomotion. This is Vinculin (Vcl) from Mus musculus (Mouse).